A 394-amino-acid polypeptide reads, in one-letter code: Protein TsgA homolog (394 aa).

12 helical membrane passes run 11–31 (WISY…GMVM), 51–71 (FLNA…EIIP), 76–96 (LVFG…GHNL), 101–121 (ISMF…TFLI), 134–154 (LLFT…AAAI), 162–182 (WYWV…LTLC), 206–226 (MGVL…LGFI), 246–266 (QLVS…SFIL), 274–294 (IVTV…STNN), 302–322 (ILAL…LGSL), 334–354 (FILT…GPIV), and 363–383 (LATA…LGFF).

The protein belongs to the major facilitator superfamily. TsgA family.

It localises to the cell inner membrane. This is Protein TsgA homolog from Yersinia enterocolitica serotype O:8 / biotype 1B (strain NCTC 13174 / 8081).